The following is a 485-amino-acid chain: Bifunctional protein HldE (485 aa).

A ribokinase region spans residues 1–326; it reads MDFSSTRVLC…AELDESAISN (326 aa). 195–198 is an ATP binding site; that stretch reads NVKE. Aspartate 271 is an active-site residue. Residues 354 to 485 form a cytidylyltransferase region; sequence FTNGCFDILH…GIVKKISTLT (132 aa).

It in the N-terminal section; belongs to the carbohydrate kinase PfkB family. The protein in the C-terminal section; belongs to the cytidylyltransferase family. In terms of assembly, homodimer.

It carries out the reaction D-glycero-beta-D-manno-heptose 7-phosphate + ATP = D-glycero-beta-D-manno-heptose 1,7-bisphosphate + ADP + H(+). It catalyses the reaction D-glycero-beta-D-manno-heptose 1-phosphate + ATP + H(+) = ADP-D-glycero-beta-D-manno-heptose + diphosphate. It functions in the pathway nucleotide-sugar biosynthesis; ADP-L-glycero-beta-D-manno-heptose biosynthesis; ADP-L-glycero-beta-D-manno-heptose from D-glycero-beta-D-manno-heptose 7-phosphate: step 1/4. The protein operates within nucleotide-sugar biosynthesis; ADP-L-glycero-beta-D-manno-heptose biosynthesis; ADP-L-glycero-beta-D-manno-heptose from D-glycero-beta-D-manno-heptose 7-phosphate: step 3/4. Functionally, catalyzes the phosphorylation of D-glycero-D-manno-heptose 7-phosphate at the C-1 position to selectively form D-glycero-beta-D-manno-heptose-1,7-bisphosphate. Its function is as follows. Catalyzes the ADP transfer from ATP to D-glycero-beta-D-manno-heptose 1-phosphate, yielding ADP-D-glycero-beta-D-manno-heptose. The protein is Bifunctional protein HldE of Granulibacter bethesdensis (strain ATCC BAA-1260 / CGDNIH1).